The sequence spans 87 residues: MANHSSAKKAARQTVKKTLVNKRRASAIKTFVKKVLHEINQGNKEEANSALVIAQSKIMQGVKKNIIKLNTASRKISKLSKKIKTMN.

This sequence belongs to the bacterial ribosomal protein bS20 family.

Functionally, binds directly to 16S ribosomal RNA. In Rickettsia bellii (strain OSU 85-389), this protein is Small ribosomal subunit protein bS20.